Consider the following 66-residue polypeptide: MPKMKTHKGSAKRFKKTGTGQLKRSHAFTSHLFANKTQKQKRKLRKATLVSKGDFKRIRQLLDNVK.

Residues 1 to 16 (MPKMKTHKGSAKRFKK) show a composition bias toward basic residues. The tract at residues 1 to 24 (MPKMKTHKGSAKRFKKTGTGQLKR) is disordered.

Belongs to the bacterial ribosomal protein bL35 family.

The polypeptide is Large ribosomal subunit protein bL35 (Anoxybacillus flavithermus (strain DSM 21510 / WK1)).